We begin with the raw amino-acid sequence, 562 residues long: Catalase T (562 aa).

Residues His64 and Asn137 contribute to the active site. Tyr351 is a binding site for heme.

It belongs to the catalase family. As to quaternary structure, homotetramer. The cofactor is heme.

The protein resides in the cytoplasm. The catalysed reaction is 2 H2O2 = O2 + 2 H2O. Occurs in almost all aerobically respiring organisms and serves to protect cells from the toxic effects of hydrogen peroxide. The protein is Catalase T (CTT1) of Saccharomyces cerevisiae (strain ATCC 204508 / S288c) (Baker's yeast).